The following is a 79-amino-acid chain: Methionine-rich peptide X (79 aa).

An N-terminal signal peptide occupies residues 1–22 (MKKLAAVMLTSCLMVAVGASFA). The disordered stretch occupies residues 37–79 (KKDDMAKDEMKKDSMAKDGMKKDAMKKDAMMKKDGMTKDEMKK).

In terms of processing, protein is oxidized (possibly on Met residues) when cells are exposed to chlorite or hypochlorite; initially the protein is highly oxidized, by 50 minutes all protein is in the reduced form.

It localises to the periplasm. In terms of biological role, serves as an oxidative stress sink, specifically for chlorite and hypochlorite. The polypeptide is Methionine-rich peptide X (Azospira oryzae (strain ATCC BAA-33 / DSM 13638 / PS) (Dechlorosoma suillum)).